Here is a 433-residue protein sequence, read N- to C-terminus: Enolase (433 aa).

Q167 provides a ligand contact to (2R)-2-phosphoglycerate. E209 acts as the Proton donor in catalysis. Residues D246, E287, and D314 each contribute to the Mg(2+) site. Residues K339, R368, S369, and K390 each coordinate (2R)-2-phosphoglycerate. K339 functions as the Proton acceptor in the catalytic mechanism.

The protein belongs to the enolase family. Mg(2+) serves as cofactor.

It is found in the cytoplasm. It localises to the secreted. Its subcellular location is the cell surface. It carries out the reaction (2R)-2-phosphoglycerate = phosphoenolpyruvate + H2O. Its pathway is carbohydrate degradation; glycolysis; pyruvate from D-glyceraldehyde 3-phosphate: step 4/5. Functionally, catalyzes the reversible conversion of 2-phosphoglycerate (2-PG) into phosphoenolpyruvate (PEP). It is essential for the degradation of carbohydrates via glycolysis. This Prochlorococcus marinus (strain NATL2A) protein is Enolase.